The primary structure comprises 532 residues: Cytochrome P450 12b1, mitochondrial (532 aa).

A heme-binding site is contributed by Cys-480.

Belongs to the cytochrome P450 family. The cofactor is heme.

The protein resides in the mitochondrion. Functionally, probably involved in steroid hormones biosynthesis. In Drosophila acanthoptera (Fruit fly), this protein is Cytochrome P450 12b1, mitochondrial (Cyp12b1).